Reading from the N-terminus, the 160-residue chain is Ureidoglycolate lyase (160 aa).

The protein belongs to the ureidoglycolate lyase family. In terms of assembly, homodimer. It depends on Ni(2+) as a cofactor.

The enzyme catalyses (S)-ureidoglycolate = urea + glyoxylate. Its pathway is nitrogen metabolism; (S)-allantoin degradation. Its function is as follows. Catalyzes the catabolism of the allantoin degradation intermediate (S)-ureidoglycolate, generating urea and glyoxylate. Involved in the anaerobic utilization of allantoin as sole nitrogen source. Reinforces the induction of genes involved in the degradation of allantoin and glyoxylate by producing glyoxylate. The protein is Ureidoglycolate lyase of Escherichia coli (strain SMS-3-5 / SECEC).